The following is a 203-amino-acid chain: Imidazoleglycerol-phosphate dehydratase (203 aa).

It belongs to the imidazoleglycerol-phosphate dehydratase family.

Its subcellular location is the cytoplasm. It catalyses the reaction D-erythro-1-(imidazol-4-yl)glycerol 3-phosphate = 3-(imidazol-4-yl)-2-oxopropyl phosphate + H2O. The protein operates within amino-acid biosynthesis; L-histidine biosynthesis; L-histidine from 5-phospho-alpha-D-ribose 1-diphosphate: step 6/9. This is Imidazoleglycerol-phosphate dehydratase from Parvibaculum lavamentivorans (strain DS-1 / DSM 13023 / NCIMB 13966).